The following is a 196-amino-acid chain: SAGA-associated factor 11 homolog (196 aa).

A disordered region spans residues 1 to 22 (MSAANMPTTTGAQGSGNQVPTT). The SGF11-type zinc-finger motif lies at 106 to 127 (CTCPNCDRLVAAARFAPHLEKC). Residues 141 to 196 (RLATKEGATSAHLHSSGNTGGTDDEDDVDWSSDKRRKKSNQNSRNNGSKKNNGKTF) are disordered. Serine 172 carries the phosphoserine modification. Residues 180-196 (NQNSRNNGSKKNNGKTF) show a composition bias toward low complexity.

Belongs to the SGF11 family. As to quaternary structure, component of some SAGA transcription coactivator-HAT complexes, at least composed of Ada2b, not/nonstop, Pcaf/Gcn5, Sgf11 and Spt3. Within the SAGA complex, Sgf11, e(y)2, and not/nonstop form an additional subcomplex of SAGA called the DUB module (deubiquitination module). Interacts directly with not/nonstop. Interacts with the AMEX complex component xmas-2. Interacts with Cbp80; important for promoter recruitment of Sgf11 that is not associated with the DUB module.

It localises to the nucleus. It is found in the nucleoplasm. The protein resides in the cytoplasm. In terms of biological role, component of the transcription regulatory histone acetylation (HAT) complex SAGA, a multiprotein complex that activates transcription by remodeling chromatin and mediating histone acetylation and deubiquitination. Within the SAGA complex, participates in a subcomplex that specifically deubiquitinates histone H2B. The SAGA complex is recruited to specific gene promoters by activators, where it is required for transcription. Required for nuclear receptor-mediated transactivation. Binds independently on SAGA to promoters in an RNA-dependent manner. Binds to mRNA and is essential for total mRNA export from the nucleus. Required to counteract heterochromatin silencing. Controls the development of neuronal connectivity in visual system by being required for accurate axon targeting in the optic lobe. Required for expression of ecdysone-induced genes such as br/broad. This Drosophila simulans (Fruit fly) protein is SAGA-associated factor 11 homolog.